The following is a 71-amino-acid chain: MPAVKVKENEPFDVALRRFKRSCEKAGVLSEVRRREHYEKPTAVRKRKAAAAVKRHLKKLQREQRKFERLY.

It belongs to the bacterial ribosomal protein bS21 family.

The chain is Small ribosomal subunit protein bS21 from Marinobacter nauticus (strain ATCC 700491 / DSM 11845 / VT8) (Marinobacter aquaeolei).